The primary structure comprises 135 residues: Small ribosomal subunit protein uS11 (135 aa).

It belongs to the universal ribosomal protein uS11 family. As to quaternary structure, part of the 30S ribosomal subunit. Interacts with proteins S7 and S18. Binds to IF-3.

Functionally, located on the platform of the 30S subunit, it bridges several disparate RNA helices of the 16S rRNA. Forms part of the Shine-Dalgarno cleft in the 70S ribosome. In Protochlamydia amoebophila (strain UWE25), this protein is Small ribosomal subunit protein uS11.